A 100-amino-acid chain; its full sequence is Putative membrane protein insertion efficiency factor (100 aa).

Belongs to the UPF0161 family.

The protein localises to the cell membrane. In terms of biological role, could be involved in insertion of integral membrane proteins into the membrane. The sequence is that of Putative membrane protein insertion efficiency factor from Enterococcus faecalis (strain ATCC 700802 / V583).